The sequence spans 701 residues: Pentatricopeptide repeat-containing protein At5g50390, chloroplastic (701 aa).

The N-terminal 47 residues, 1–47 (MEIPLSRYQSIRLDEIRDSSSNPKVLTFPRKFSLRGRRWKNPFGRLS), are a transit peptide targeting the chloroplast. PPR repeat units follow at residues 86–116 (SGVT…LEIR), 122–156 (GVST…GFEP), 157–187 (EQYM…IPER), 188–218 (NLYS…MWEE), 223–257 (ETHT…GVVD), 258–288 (NTFV…MPEK), 289–323 (TTVA…GVSI), 324–358 (DQFT…GFES), 359–389 (EIVA…LPRK), 390–424 (NIIS…NVAP), 425–460 (NHVT…GIKP), and 461–491 (RAMH…APLK). The segment at 496 to 571 (MWAALLNACR…MPACTWVEVG (76 aa)) is type E motif. Residues 572-606 (DQTHSFLSGDRFDSYNETVKRQIYQKVDELMEEIS) are type E(+) motif; degenerate. Positions 607-701 (EYGYSEEEQH…EGKCSCGGYW (95 aa)) are type DYW motif.

It belongs to the PPR family. PCMP-H subfamily.

Its subcellular location is the plastid. The protein resides in the chloroplast. In Arabidopsis thaliana (Mouse-ear cress), this protein is Pentatricopeptide repeat-containing protein At5g50390, chloroplastic (PCMP-H58).